A 351-amino-acid chain; its full sequence is 2-Hydroxyacid oxidase 2 (351 aa).

Positions Ser-2–Leu-351 constitute an FMN hydroxy acid dehydrogenase domain. FMN contacts are provided by residues Pro-77–Gly-79, Ser-106, and Gln-128. Tyr-130 is a binding site for a 2-oxocarboxylate. Thr-156 is a binding site for FMN. Arg-165 lines the a 2-oxocarboxylate pocket. Thr-178 is subject to Phosphothreonine. Lys-222 provides a ligand contact to FMN. Catalysis depends on His-246, which acts as the Proton acceptor. Arg-249 provides a ligand contact to a 2-oxocarboxylate. FMN-binding positions include Asp-277–Arg-281 and Gly-300–Arg-301. The short motif at Ser-349–Leu-351 is the Microbody targeting signal element.

The protein belongs to the FMN-dependent alpha-hydroxy acid dehydrogenase family. In terms of assembly, homotetramer. FMN is required as a cofactor. As to expression, expressed in the liver and kidney.

The protein localises to the peroxisome. The enzyme catalyses a (2S)-2-hydroxycarboxylate + O2 = a 2-oxocarboxylate + H2O2. It carries out the reaction 2-hydroxyhexadecanoate + O2 = 2-oxohexadecanoate + H2O2. It catalyses the reaction 2-hydroxyoctanoate + O2 = 2-oxooctanoate + H2O2. It participates in lipid metabolism; fatty acid metabolism. Functionally, oxidase that catalyzes the oxidation of medium and long chain hydroxyacids such as 2-hydroxyhexadecanoate and 2-hydroxyoctanoate, to the correspondong 2-oxoacids. Its role in the oxidation of 2-hydroxy fatty acids may contribute to the general pathway of fatty acid alpha-oxidation. Active in vitro with the artificial electron acceptor 2,6-dichlorophenolindophenol (DCIP), but O2 is believed to be the physiological electron acceptor, leading to the production of H2O2. Is not active on glycolate, glyoxylate, L-lactate and 2-hydroxybutanoate. In Homo sapiens (Human), this protein is 2-Hydroxyacid oxidase 2 (HAO2).